The chain runs to 196 residues: HTH-type transcriptional regulator BetI (196 aa).

Positions 8–68 (PVRREQLIRA…AAMRQILREL (61 aa)) constitute an HTH tetR-type domain. A DNA-binding region (H-T-H motif) is located at residues 31 to 50 (TVATIAKKAGLSSGIVAHYF).

Its pathway is amine and polyamine biosynthesis; betaine biosynthesis via choline pathway [regulation]. Functionally, repressor involved in the biosynthesis of the osmoprotectant glycine betaine. It represses transcription of the choline transporter BetT and the genes of BetAB involved in the synthesis of glycine betaine. The protein is HTH-type transcriptional regulator BetI of Stenotrophomonas maltophilia (strain R551-3).